Here is a 298-residue protein sequence, read N- to C-terminus: Ethanolamine ammonia-lyase small subunit (298 aa).

V210, E231, and C261 together coordinate adenosylcob(III)alamin.

It belongs to the EutC family. In terms of assembly, the basic unit is a heterodimer which dimerizes to form tetramers. The heterotetramers trimerize; 6 large subunits form a core ring with 6 small subunits projecting outwards. It depends on adenosylcob(III)alamin as a cofactor.

The protein localises to the bacterial microcompartment. It carries out the reaction ethanolamine = acetaldehyde + NH4(+). The protein operates within amine and polyamine degradation; ethanolamine degradation. In terms of biological role, catalyzes the deamination of various vicinal amino-alcohols to oxo compounds. Allows this organism to utilize ethanolamine as the sole source of nitrogen and carbon in the presence of external vitamin B12. This Salmonella heidelberg (strain SL476) protein is Ethanolamine ammonia-lyase small subunit.